We begin with the raw amino-acid sequence, 263 residues long: MKKSVQKNVKGKQVNLKVKPSVHDLSKTQQTKLTVGSMGLGLIIIQHGPYLQISHLITKGAAARDGTLQPGDVLISVGYANVLGYTLREFLKLLQHITIGTILQIKVYRDFIDIPQEWQEIYDLIPETKFPITRTTKKTEEAKDGSVTSSDDDEAFDTRLKYYKYPRSTGHYPVRRPMSISREWHGYKKKNHVMRVGKDINCDVMIHRDHKKEVRAPSPYWTMVKQDNEISSSSSASSTSDAFWLEDCTPVEKGSSEPVSRVG.

One can recognise a PDZ domain in the interval 30–109; sequence QTKLTVGSMG…GTILQIKVYR (80 aa).

In Bos taurus (Bovine), this protein is PDZ domain-containing protein 9 (PDZD9).